The chain runs to 290 residues: MLVRNRYLGELLKNSRSFSVLNSSVRSGHNKWSTIKHGKAKNDAERNKINNKFANQIAMSVKLGNGITDPSMNIRLATSIELANKNNVSKKVIENAIRKASGSSASGKDSNASELCVYEGMGPGGVAIVVEALTDNKNRTIGLIRSAFNKANGSMTPTLFFFDKKGYVTMVPPKMLDTEDKVLESVLEIQGIEDIAPVQEDAEDLECDTETETTGQTYEAVMEPADTNKVAALLKERGFHIRDLGIGYNAKPDMEVFVQGDETLEKLQKLTTALEDIDEVTSLYTNASNA.

It belongs to the TACO1 family.

Its subcellular location is the mitochondrion. The chain is Probable transcriptional regulatory protein HAH1 from Saccharomyces cerevisiae (strain ATCC 204508 / S288c) (Baker's yeast).